Reading from the N-terminus, the 642-residue chain is Protein BZZ1 (642 aa).

The F-BAR domain occupies 6–272 (YKFSDELHDD…EIAKNEPVLD (267 aa)). A coiled-coil region spans residues 113 to 190 (LDIAEKLKKL…QRNLKLSESD (78 aa)). The Phorbol-ester/DAG-type zinc-finger motif lies at 397–447 (FHDFKHVSFKLPTSCSYCREIIWGLSKRGCVCKNCGFKCHARCELLVPANC). SH3 domains follow at residues 515-575 (ASKV…LNDE) and 584-642 (GDSS…VTDV).

This sequence belongs to the BZZ1 family.

Its subcellular location is the cell tip. The protein resides in the cytoplasm. It is found in the cytoskeleton. It localises to the actin patch. In terms of biological role, plays a role in endocytosis and trafficking to the vacuole. Functions with type I myosins to restore polarity of the actin cytoskeleton after NaCl stress. In Schizosaccharomyces pombe (strain 972 / ATCC 24843) (Fission yeast), this protein is Protein BZZ1 (bzz1).